Reading from the N-terminus, the 376-residue chain is Glutamate 5-kinase (376 aa).

Residue Lys15 coordinates ATP. The substrate site is built by Ser56, Asp143, and Asn155. 175–176 is an ATP binding site; the sequence is SD. Positions 281 to 358 constitute a PUA domain; that stretch reads KGTLTIDAGA…PDVMMILGIS (78 aa).

This sequence belongs to the glutamate 5-kinase family.

It localises to the cytoplasm. The catalysed reaction is L-glutamate + ATP = L-glutamyl 5-phosphate + ADP. It participates in amino-acid biosynthesis; L-proline biosynthesis; L-glutamate 5-semialdehyde from L-glutamate: step 1/2. In terms of biological role, catalyzes the transfer of a phosphate group to glutamate to form L-glutamate 5-phosphate. The chain is Glutamate 5-kinase from Rhodopseudomonas palustris (strain BisB5).